Here is an 84-residue protein sequence, read N- to C-terminus: Dolichol phosphate-mannose biosynthesis regulatory protein (84 aa).

Transmembrane regions (helical) follow at residues 11 to 31 (LGLV…VILL) and 49 to 69 (YAVA…GLFI).

The protein belongs to the DPM2 family. Component of the dolichol-phosphate mannose (DPM) synthase complex composed of DPM1, DPM2 and DPM3; in the complex interacts directly with DPM3. Component of the glycosylphosphatidylinositol-N-acetylglucosaminyltransferase (GPI-GnT) complex composed at least by PIGA, PIGC, PIGH, PIGP, PIGQ, PIGY and DPM2. Interacts with PIGA, PIGC and PIGQ.

The protein resides in the endoplasmic reticulum membrane. Its pathway is protein modification; protein glycosylation. Its function is as follows. Regulates the biosynthesis of dolichol phosphate-mannose. Regulatory subunit of the dolichol-phosphate mannose (DPM) synthase complex; essential for the ER localization and stable expression of DPM1. Part of the glycosylphosphatidylinositol-N-acetylglucosaminyltransferase (GPI-GnT) complex that catalyzes the transfer of N-acetylglucosamine from UDP-N-acetylglucosamine to phosphatidylinositol and participates in the first step of GPI biosynthesis. May act by regulating the GPI-GNT complex. This Homo sapiens (Human) protein is Dolichol phosphate-mannose biosynthesis regulatory protein.